Reading from the N-terminus, the 339-residue chain is Heat-inducible transcription repressor HrcA (339 aa).

The protein belongs to the HrcA family.

In terms of biological role, negative regulator of class I heat shock genes (grpE-dnaK-dnaJ and groELS operons). Prevents heat-shock induction of these operons. The protein is Heat-inducible transcription repressor HrcA of Nitrosospira multiformis (strain ATCC 25196 / NCIMB 11849 / C 71).